We begin with the raw amino-acid sequence, 610 residues long: UvrABC system protein C (610 aa).

Residues H16–V94 form the GIY-YIG domain. The region spanning N204 to V239 is the UVR domain.

This sequence belongs to the UvrC family. In terms of assembly, interacts with UvrB in an incision complex.

Its subcellular location is the cytoplasm. Its function is as follows. The UvrABC repair system catalyzes the recognition and processing of DNA lesions. UvrC both incises the 5' and 3' sides of the lesion. The N-terminal half is responsible for the 3' incision and the C-terminal half is responsible for the 5' incision. In Vibrio vulnificus (strain CMCP6), this protein is UvrABC system protein C.